Here is a 149-residue protein sequence, read N- to C-terminus: Evolved beta-galactosidase subunit beta (149 aa).

As to quaternary structure, heterooctamer of 4 alpha and 4 beta subunits.

Functionally, required for full activity of the EbgA enzyme. Exact function not known. This Escherichia coli O6:H1 (strain CFT073 / ATCC 700928 / UPEC) protein is Evolved beta-galactosidase subunit beta (ebgC).